Here is a 309-residue protein sequence, read N- to C-terminus: N(5)-(carboxyethyl)ornithine synthase (309 aa).

Residues Arg15, Lys71, and His92 each contribute to the pyruvate site. 171-176 (GSGNVA) lines the NADP(+) pocket.

The protein belongs to the AlaDH/PNT family. CEOS subfamily. In terms of assembly, homotetramer.

It catalyses the reaction N(5)-[1(S)-1-carboxyethyl]-L-ornithine + NADP(+) + H2O = L-ornithine + pyruvate + NADPH + H(+). Functionally, catalyzes the NADPH-dependent reductive condensation between pyruvic acid and the side chain amino group of L-ornithine to form N(5)-(L-1-carboxyethyl)-L-ornithine. To a lesser extent, can also use L-lysine as substrate (yielding N(6)-(L-1-carboxyethyl)-L-lysine). The protein is N(5)-(carboxyethyl)ornithine synthase (ceo) of Lactococcus lactis subsp. lactis (strain IL1403) (Streptococcus lactis).